The chain runs to 83 residues: MKTLLLTLVVVTIVCLDLGYTRICFNHQSSQPQTTKTCSPGESSCYHKQWSDFRGTIIERGCGCPTVKPGINLSCCESEVCNN.

Positions 1-21 (MKTLLLTLVVVTIVCLDLGYT) are cleaved as a signal peptide. Residues 24–38 (CFNHQSSQPQTTKTC) form a loop I region. 4 disulfides stabilise this stretch: Cys-24–Cys-45, Cys-38–Cys-62, Cys-64–Cys-75, and Cys-76–Cys-81. A stretch between loop I and loop II region spans residues 39 to 44 (SPGESS). Positions 45–62 (CYHKQWSDFRGTIIERGC) are loop II. Residues 64–75 (CPTVKPGINLSC) are loop III.

The protein belongs to the three-finger toxin family. Short-chain subfamily. Type I alpha-neurotoxin sub-subfamily. As to expression, expressed by the venom gland.

It localises to the secreted. In terms of biological role, binds to muscle nicotinic acetylcholine receptor (nAChR) and inhibit acetylcholine from binding to the receptor, thereby impairing neuromuscular transmission. Binds to Torpedo marmorata nAChR (Kd=0.14 nM). In Laticauda semifasciata (Black-banded sea krait), this protein is Erabutoxin c.